We begin with the raw amino-acid sequence, 381 residues long: Flap endonuclease 1 (381 aa).

The segment at 1–105 (MGVKGLNQLI…GELEKRLLKR (105 aa)) is N-domain. Mg(2+) is bound at residue D34. Residues R47 and R71 each contribute to the DNA site. Mg(2+)-binding residues include D87, E159, E161, D180, and D182. Residues 123-254 (EVMKFEKRLV…VTAYKLIKEH (132 aa)) are I-domain. E159 contributes to the DNA binding site. DNA-binding residues include G232 and D234. D234 serves as a coordination point for Mg(2+). Residues 340 to 348 (VQGRLDGFF) form an interaction with PCNA region. The interval 354–381 (PGAKAGDKKGDKKRGSDSKASNNKKKRK) is disordered. The span at 358–370 (AGDKKGDKKRGSD) shows a compositional bias: basic and acidic residues.

The protein belongs to the XPG/RAD2 endonuclease family. FEN1 subfamily. Interacts with PCNA. Three molecules of FEN1 bind to one PCNA trimer with each molecule binding to one PCNA monomer. PCNA stimulates the nuclease activity without altering cleavage specificity. The cofactor is Mg(2+). Phosphorylated. Phosphorylation upon DNA damage induces relocalization to the nuclear plasma.

The protein localises to the nucleus. It localises to the nucleolus. Its subcellular location is the nucleoplasm. The protein resides in the mitochondrion. Its function is as follows. Structure-specific nuclease with 5'-flap endonuclease and 5'-3' exonuclease activities involved in DNA replication and repair. During DNA replication, cleaves the 5'-overhanging flap structure that is generated by displacement synthesis when DNA polymerase encounters the 5'-end of a downstream Okazaki fragment. It enters the flap from the 5'-end and then tracks to cleave the flap base, leaving a nick for ligation. Also involved in the long patch base excision repair (LP-BER) pathway, by cleaving within the apurinic/apyrimidinic (AP) site-terminated flap. Acts as a genome stabilization factor that prevents flaps from equilibrating into structures that lead to duplications and deletions. Also possesses 5'-3' exonuclease activity on nicked or gapped double-stranded DNA, and exhibits RNase H activity. Also involved in replication and repair of rDNA and in repairing mitochondrial DNA. This chain is Flap endonuclease 1, found in Scheffersomyces stipitis (strain ATCC 58785 / CBS 6054 / NBRC 10063 / NRRL Y-11545) (Yeast).